The primary structure comprises 315 residues: Ribose-phosphate pyrophosphokinase (315 aa).

Residues D37 to E39 and R96 to Q97 contribute to the ATP site. Residues H131 and D170 each coordinate Mg(2+). K194 is an active-site residue. Residues R196, D220, and D224–T228 each bind D-ribose 5-phosphate.

This sequence belongs to the ribose-phosphate pyrophosphokinase family. Class I subfamily. As to quaternary structure, homohexamer. The cofactor is Mg(2+).

It is found in the cytoplasm. The catalysed reaction is D-ribose 5-phosphate + ATP = 5-phospho-alpha-D-ribose 1-diphosphate + AMP + H(+). Its pathway is metabolic intermediate biosynthesis; 5-phospho-alpha-D-ribose 1-diphosphate biosynthesis; 5-phospho-alpha-D-ribose 1-diphosphate from D-ribose 5-phosphate (route I): step 1/1. Its function is as follows. Involved in the biosynthesis of the central metabolite phospho-alpha-D-ribosyl-1-pyrophosphate (PRPP) via the transfer of pyrophosphoryl group from ATP to 1-hydroxyl of ribose-5-phosphate (Rib-5-P). The sequence is that of Ribose-phosphate pyrophosphokinase from Shewanella oneidensis (strain ATCC 700550 / JCM 31522 / CIP 106686 / LMG 19005 / NCIMB 14063 / MR-1).